A 481-amino-acid chain; its full sequence is uncharacterized protein (481 aa).

This is an uncharacterized protein from Cryphonectria parasitica (Chestnut blight fungus).